The sequence spans 513 residues: Probable E3 ubiquitin-protein ligase XBOS34 (513 aa).

ANK repeat units follow at residues 39-69 (EGKTPLMVASMRPDLINVVQVLIELGANVNA), 75-104 (YCGTALHHAAKKGLEQTVHLLLSHGANPFI), and 108-137 (DCHTALDLAREKGHVNVVRAIEGRISLFCG). 2 stretches are compositionally biased toward polar residues: residues 309–327 (ITTTTATNDWGNPPSNSLN) and 335–355 (SAPSKTSGQVPVVTSSSSTYN). Disordered regions lie at residues 309 to 378 (ITTT…QNST) and 423 to 455 (SADGGTAVSSAKPAENEGDAKPAESDANASNSG). Over residues 361–378 (GTSSGQSSSKHNKSQNST) the composition is skewed to low complexity. Residues 436–446 (AENEGDAKPAE) show a composition bias toward basic and acidic residues. Residues 462 to 501 (CVICLDAPVEGACIPCGHMAGCMSCLKDIESKKWGCPICR) form an RING-type zinc finger.

It catalyses the reaction S-ubiquitinyl-[E2 ubiquitin-conjugating enzyme]-L-cysteine + [acceptor protein]-L-lysine = [E2 ubiquitin-conjugating enzyme]-L-cysteine + N(6)-ubiquitinyl-[acceptor protein]-L-lysine.. The protein operates within protein modification; protein ubiquitination. In Oryza sativa subsp. japonica (Rice), this protein is Probable E3 ubiquitin-protein ligase XBOS34 (XBOS34).